Consider the following 340-residue polypeptide: Probable complex I intermediate-associated protein 30, mitochondrial (340 aa).

Belongs to the CIA30 family.

The protein resides in the mitochondrion. Its function is as follows. Chaperone protein involved in the assembly of the mitochondrial NADH:ubiquinone oxidoreductase complex (complex I). Required for normal growth and reproduction. This Caenorhabditis elegans protein is Probable complex I intermediate-associated protein 30, mitochondrial (nuaf-1).